We begin with the raw amino-acid sequence, 487 residues long: Glycogen synthase (487 aa).

An ADP-alpha-D-glucose-binding site is contributed by Lys23.

This sequence belongs to the glycosyltransferase 1 family. Bacterial/plant glycogen synthase subfamily.

The enzyme catalyses [(1-&gt;4)-alpha-D-glucosyl](n) + ADP-alpha-D-glucose = [(1-&gt;4)-alpha-D-glucosyl](n+1) + ADP + H(+). It participates in glycan biosynthesis; glycogen biosynthesis. Synthesizes alpha-1,4-glucan chains using ADP-glucose. The protein is Glycogen synthase of Pseudomonas fluorescens (strain Pf0-1).